We begin with the raw amino-acid sequence, 199 residues long: Chaperone protein TorD (199 aa).

The protein belongs to the TorD/DmsD family. TorD subfamily.

It is found in the cytoplasm. In terms of biological role, involved in the biogenesis of TorA. Acts on TorA before the insertion of the molybdenum cofactor and, as a result, probably favors a conformation of the apoenzyme that is competent for acquiring the cofactor. This Shigella boydii serotype 18 (strain CDC 3083-94 / BS512) protein is Chaperone protein TorD.